Consider the following 69-residue polypeptide: Cytochrome c oxidase subunit 8A, mitochondrial (69 aa).

The transit peptide at 1–25 (MSVLTPLLLRGLAGSARRLPVPRAQ) directs the protein to the mitochondrion. An SIFI-degron motif is present at residues 2 to 19 (SVLTPLLLRGLAGSARRL). Residues 26–36 (IHSKPPREQLG) are Mitochondrial matrix-facing. Residues 37–60 (TMDVAIGITSCFLCFLLPAGWVLS) traverse the membrane as a helical segment. Residues 61 to 69 (HLESYKKRE) are Mitochondrial intermembrane-facing.

The protein belongs to the cytochrome c oxidase VIII family. In terms of assembly, component of the cytochrome c oxidase (complex IV, CIV), a multisubunit enzyme composed of 14 subunits. The complex is composed of a catalytic core of 3 subunits MT-CO1, MT-CO2 and MT-CO3, encoded in the mitochondrial DNA, and 11 supernumerary subunits COX4I, COX5A, COX5B, COX6A, COX6B, COX6C, COX7A, COX7B, COX7C, COX8 and NDUFA4, which are encoded in the nuclear genome. The complex exists as a monomer or a dimer and forms supercomplexes (SCs) in the inner mitochondrial membrane with NADH-ubiquinone oxidoreductase (complex I, CI) and ubiquinol-cytochrome c oxidoreductase (cytochrome b-c1 complex, complex III, CIII), resulting in different assemblies (supercomplex SCI(1)III(2)IV(1) and megacomplex MCI(2)III(2)IV(2)). Post-translationally, in response to mitochondrial stress, the precursor protein is ubiquitinated by the SIFI complex in the cytoplasm before mitochondrial import, leading to its degradation. Within the SIFI complex, UBR4 initiates ubiquitin chain that are further elongated or branched by KCMF1.

Its subcellular location is the mitochondrion inner membrane. Its pathway is energy metabolism; oxidative phosphorylation. Component of the cytochrome c oxidase, the last enzyme in the mitochondrial electron transport chain which drives oxidative phosphorylation. The respiratory chain contains 3 multisubunit complexes succinate dehydrogenase (complex II, CII), ubiquinol-cytochrome c oxidoreductase (cytochrome b-c1 complex, complex III, CIII) and cytochrome c oxidase (complex IV, CIV), that cooperate to transfer electrons derived from NADH and succinate to molecular oxygen, creating an electrochemical gradient over the inner membrane that drives transmembrane transport and the ATP synthase. Cytochrome c oxidase is the component of the respiratory chain that catalyzes the reduction of oxygen to water. Electrons originating from reduced cytochrome c in the intermembrane space (IMS) are transferred via the dinuclear copper A center (CU(A)) of subunit 2 and heme A of subunit 1 to the active site in subunit 1, a binuclear center (BNC) formed by heme A3 and copper B (CU(B)). The BNC reduces molecular oxygen to 2 water molecules using 4 electrons from cytochrome c in the IMS and 4 protons from the mitochondrial matrix. In Carlito syrichta (Philippine tarsier), this protein is Cytochrome c oxidase subunit 8A, mitochondrial (COX8A).